Here is a 156-residue protein sequence, read N- to C-terminus: MLYKSIDEFVKVIDKKKRIIGLDFGEKKIGIALSDKTNLVAIPYSVYIKRSTRKDLGSLYNIFVENNVGSMVIGWPIELSGIESELCQKVVLLANRIIAKYKINIYLHDERYSTAMATRVAKLANIKRKESQSIDDKIAAMLILQQVLDIMKIYQI.

Belongs to the YqgF nuclease family.

The protein resides in the cytoplasm. Could be a nuclease involved in processing of the 5'-end of pre-16S rRNA. The protein is Putative pre-16S rRNA nuclease of Ehrlichia canis (strain Jake).